Reading from the N-terminus, the 156-residue chain is ATP synthase subunit b (156 aa).

A helical membrane pass occupies residues 3 to 23 (INFTLLAQALAFAGLIWIIAT).

It belongs to the ATPase B chain family. As to quaternary structure, F-type ATPases have 2 components, F(1) - the catalytic core - and F(0) - the membrane proton channel. F(1) has five subunits: alpha(3), beta(3), gamma(1), delta(1), epsilon(1). F(0) has three main subunits: a(1), b(2) and c(10-14). The alpha and beta chains form an alternating ring which encloses part of the gamma chain. F(1) is attached to F(0) by a central stalk formed by the gamma and epsilon chains, while a peripheral stalk is formed by the delta and b chains.

The protein localises to the cell inner membrane. In terms of biological role, f(1)F(0) ATP synthase produces ATP from ADP in the presence of a proton or sodium gradient. F-type ATPases consist of two structural domains, F(1) containing the extramembraneous catalytic core and F(0) containing the membrane proton channel, linked together by a central stalk and a peripheral stalk. During catalysis, ATP synthesis in the catalytic domain of F(1) is coupled via a rotary mechanism of the central stalk subunits to proton translocation. Functionally, component of the F(0) channel, it forms part of the peripheral stalk, linking F(1) to F(0). The sequence is that of ATP synthase subunit b from Stenotrophomonas maltophilia (strain R551-3).